The following is a 245-amino-acid chain: 1-(5-phosphoribosyl)-5-[(5-phosphoribosylamino)methylideneamino] imidazole-4-carboxamide isomerase (245 aa).

The active-site Proton acceptor is Asp-7. Asp-129 functions as the Proton donor in the catalytic mechanism.

Belongs to the HisA/HisF family.

It is found in the cytoplasm. The catalysed reaction is 1-(5-phospho-beta-D-ribosyl)-5-[(5-phospho-beta-D-ribosylamino)methylideneamino]imidazole-4-carboxamide = 5-[(5-phospho-1-deoxy-D-ribulos-1-ylimino)methylamino]-1-(5-phospho-beta-D-ribosyl)imidazole-4-carboxamide. It participates in amino-acid biosynthesis; L-histidine biosynthesis; L-histidine from 5-phospho-alpha-D-ribose 1-diphosphate: step 4/9. The protein is 1-(5-phosphoribosyl)-5-[(5-phosphoribosylamino)methylideneamino] imidazole-4-carboxamide isomerase of Escherichia coli O81 (strain ED1a).